A 158-amino-acid chain; its full sequence is SsrA-binding protein (158 aa).

The interval 131-158 is disordered; it reads YDKRQTLRERQDKREADRAMSSHRRLGE.

The protein belongs to the SmpB family.

It is found in the cytoplasm. Its function is as follows. Required for rescue of stalled ribosomes mediated by trans-translation. Binds to transfer-messenger RNA (tmRNA), required for stable association of tmRNA with ribosomes. tmRNA and SmpB together mimic tRNA shape, replacing the anticodon stem-loop with SmpB. tmRNA is encoded by the ssrA gene; the 2 termini fold to resemble tRNA(Ala) and it encodes a 'tag peptide', a short internal open reading frame. During trans-translation Ala-aminoacylated tmRNA acts like a tRNA, entering the A-site of stalled ribosomes, displacing the stalled mRNA. The ribosome then switches to translate the ORF on the tmRNA; the nascent peptide is terminated with the 'tag peptide' encoded by the tmRNA and targeted for degradation. The ribosome is freed to recommence translation, which seems to be the essential function of trans-translation. This chain is SsrA-binding protein, found in Clavibacter michiganensis subsp. michiganensis (strain NCPPB 382).